The sequence spans 850 residues: Protein SEY1 (850 aa).

Residues Met-1–Pro-27 are disordered. At Met-1–His-741 the chain is on the cytoplasmic side. Residues Glu-12–Pro-27 show a composition bias toward low complexity. Positions Asn-64–Tyr-297 constitute a GB1/RHD3-type G domain. Gly-74–Ser-81 is a GTP binding site. The helical transmembrane segment at Ile-742 to Leu-762 threads the bilayer. Residues Arg-763–Pro-765 lie on the Lumenal side of the membrane. Residues Phe-766 to Leu-786 form a helical membrane-spanning segment. Residues Leu-787–Ser-850 lie on the Cytoplasmic side of the membrane. The segment at Gln-816–Ser-850 is disordered.

Belongs to the TRAFAC class dynamin-like GTPase superfamily. GB1/RHD3 GTPase family. RHD3 subfamily.

Its subcellular location is the endoplasmic reticulum membrane. Cooperates with the reticulon proteins and tubule-shaping DP1 family proteins to generate and maintain the structure of the tubular endoplasmic reticulum network. Has GTPase activity, which is required for its function in ER organization. The polypeptide is Protein SEY1 (Meyerozyma guilliermondii (strain ATCC 6260 / CBS 566 / DSM 6381 / JCM 1539 / NBRC 10279 / NRRL Y-324) (Yeast)).